The sequence spans 469 residues: Properdin (469 aa).

Positions 1-27 (MITEGAQAPRLLLPPLLLLLTLPATGS) are cleaved as a signal peptide. TSP type-1 domains lie at 28–76 (DPVL…QPCR), 77–134 (SPRW…QCCP), 136–191 (MGGW…QSCP), 193–255 (HGAW…PPCP), 257–313 (AGSW…VPCP), 315–377 (DGEW…QHCP), and 379–462 (KGSW…PACK). 3 disulfides stabilise this stretch: cysteine 32-cysteine 56, cysteine 43-cysteine 72, and cysteine 57-cysteine 75. C-linked (Man) tryptophan glycans are attached at residues tryptophan 83 and tryptophan 86. 7 disulfides stabilise this stretch: cysteine 89-cysteine 127, cysteine 93-cysteine 133, cysteine 104-cysteine 111, cysteine 132-cysteine 170, cysteine 148-cysteine 184, cysteine 152-cysteine 190, and cysteine 163-cysteine 174. C-linked (Man) tryptophan glycans are attached at residues tryptophan 139, tryptophan 142, and tryptophan 145. Threonine 151 carries an O-linked (Fuc...) threonine glycan. 3 C-linked (Man) tryptophan glycosylation sites follow: tryptophan 196, tryptophan 199, and tryptophan 202. Disulfide bonds link cysteine 205-cysteine 248, cysteine 209-cysteine 254, and cysteine 224-cysteine 238. Serine 208 is a glycosylation site (O-linked (Fuc...) serine). The interval 218–238 (ETRSRKCSAPEPSQKPPGKPC) is disordered. Tryptophan 260 and tryptophan 263 each carry a C-linked (Man) tryptophan glycan. 3 disulfide bridges follow: cysteine 269–cysteine 306, cysteine 273–cysteine 312, and cysteine 284–cysteine 296. Threonine 272 carries O-linked (Fuc...) threonine glycosylation. 2 C-linked (Man) tryptophan glycosylation sites follow: tryptophan 321 and tryptophan 324. 3 disulfides stabilise this stretch: cysteine 327-cysteine 370, cysteine 337-cysteine 376, and cysteine 350-cysteine 360. The interaction with Complement C3 beta chain stretch occupies residues 351–359 (KGRKFDGHR). Residues tryptophan 382, tryptophan 385, and tryptophan 388 are each glycosylated (C-linked (Man) tryptophan). Cystine bridges form between cysteine 391–cysteine 455, cysteine 395–cysteine 461, and cysteine 407–cysteine 439. Asparagine 428 carries an N-linked (GlcNAc...) asparagine glycan.

In plasma, properdin exists as dimers, trimers or tetramers in the relative proportions of 26:54:20. Interacts with the pro-C3-convertase enzyme complex (C3b-Bb) comprised of Complement C3 beta chain (C3b) and the Complement factor B Bb fragment (Bb), where it binds (via its TSP type-1 5 domain) with C3b and Bb. This interaction stabilizes the complex and allows it to become the active C3-convertase enzyme complex (C3b-Bb-FP). Interacts with C3b. Interacts with CFB.

It localises to the secreted. Functionally, a positive regulator of the alternate pathway of complement. It binds to and stabilizes the C3- and C5-convertase enzyme complexes. Inhibits CFI-CFH mediated degradation of Inhibits CFI-CFH mediated degradation of Complement C3 beta chain (C3b). This Pongo abelii (Sumatran orangutan) protein is Properdin (CFP).